The primary structure comprises 338 residues: Glycerol-3-phosphate dehydrogenase [NAD(P)+] (338 aa).

Residues Ser-13, Trp-14, and Lys-108 each coordinate NADPH. Sn-glycerol 3-phosphate-binding residues include Lys-108, Gly-139, and Ser-141. Residue Ala-143 participates in NADPH binding. Sn-glycerol 3-phosphate-binding residues include Lys-194, Asp-247, Ser-257, Arg-258, and Asn-259. Lys-194 functions as the Proton acceptor in the catalytic mechanism. Arg-258 contributes to the NADPH binding site. Positions 282 and 284 each coordinate NADPH.

The protein belongs to the NAD-dependent glycerol-3-phosphate dehydrogenase family.

It localises to the cytoplasm. It catalyses the reaction sn-glycerol 3-phosphate + NAD(+) = dihydroxyacetone phosphate + NADH + H(+). The enzyme catalyses sn-glycerol 3-phosphate + NADP(+) = dihydroxyacetone phosphate + NADPH + H(+). Its pathway is membrane lipid metabolism; glycerophospholipid metabolism. Its function is as follows. Catalyzes the reduction of the glycolytic intermediate dihydroxyacetone phosphate (DHAP) to sn-glycerol 3-phosphate (G3P), the key precursor for phospholipid synthesis. The chain is Glycerol-3-phosphate dehydrogenase [NAD(P)+] from Streptococcus pyogenes serotype M2 (strain MGAS10270).